The sequence spans 139 residues: Actin-depolymerizing factor (139 aa).

Residues 5-139 form the ADF-H domain; it reads SSGMAVDDEC…SMDIIKARAF (135 aa).

Belongs to the actin-binding proteins ADF family. As to expression, preferentially in mature anther.

Functionally, actin-depolymerizing protein. Severs actin filaments (F-actin) and binds to actin monomers. This Lilium longiflorum (Trumpet lily) protein is Actin-depolymerizing factor.